The following is a 431-amino-acid chain: Tol-Pal system protein TolB (431 aa).

The N-terminal stretch at 1–26 (MRLMTKLGFRALVASCLIAAGAAANA) is a signal peptide. The interval 411-431 (PQILSVQGGSVREPSWGPFMQ) is disordered.

Belongs to the TolB family. In terms of assembly, the Tol-Pal system is composed of five core proteins: the inner membrane proteins TolA, TolQ and TolR, the periplasmic protein TolB and the outer membrane protein Pal. They form a network linking the inner and outer membranes and the peptidoglycan layer.

The protein resides in the periplasm. Its function is as follows. Part of the Tol-Pal system, which plays a role in outer membrane invagination during cell division and is important for maintaining outer membrane integrity. The protein is Tol-Pal system protein TolB of Burkholderia ambifaria (strain ATCC BAA-244 / DSM 16087 / CCUG 44356 / LMG 19182 / AMMD) (Burkholderia cepacia (strain AMMD)).